The following is a 261-amino-acid chain: MASTSVSQGRVALVTGAGQGIGRAIALRLASDGFDVALNDLQANEANLVSALAAIEAVGRKGCYIFADVSQETEVEQMISKVVEELGGLDVMVCNAGISLMKSFFDTTAEDFDRITSVNLRGTFLCYKHAGKQMVTQGKGGRIIGACSGTGKKGQPLFSAYAASKFGIRGLTQVAALEFGPHGISVNAFAPGPVKTPMYDHFETIIGTPKGVLEQELNKTAALGRIALPEDVAVVVSFLASKEASLITGQTINVDGGIVFD.

Residues Ile-21, Asp-68, Asn-95, Lys-128, Tyr-161, Lys-165, Val-194, and Thr-196 each coordinate NADP(+). Tyr-161 functions as the Proton acceptor in the catalytic mechanism. The active-site Lowers pKa of active site Tyr is the Lys-165.

The protein belongs to the short-chain dehydrogenases/reductases (SDR) family.

The protein operates within secondary metabolite biosynthesis. Short-chain dehydrogenase/reductase, part of the gene cluster that mediates the biosynthesis of melleolides, a range of antifungal and phytotoxic polyketide derivatives composed of an orsellinic acid (OA) moiety esterified to various sesquiterpene alcohols. The first step in melleolides biosynthesis is performed by the delta(6)-protoilludene synthase PRO1 which catalyzes the cyclization of farnesyl diphosphate to protoilludene. The orsellinic acid synthase armB produces OA by condensing acetyl-CoA with 3 malonyl-CoA units in a three-round chain elongation reaction folowed by a C2-C7 ring closure. ArmB further catalyzes the trans-esterification of OA to the various sesquiterpene alcohols resulting from the hydroxylation of protoilludene. The melleolides cluster also includes 5 cytochrome P450 monooxygenases, 4 NAD(+)-dependent oxidoreductases, one flavin-dependent oxidoreductase, and one O-methyltransferase. The cytochrome P450 monooxygenases may be involved in protoilludene hydroxylation to elaborate melleolides with multiple alcohol groups, such as melleolide D, which carries alcohol functionalities at C-4, C-5, C-10, and C-13. The role of the NAD(+)-dependent enzymes remains unknown. Numerous melleolides, including arnamial, show 5'-O-methylation of the aromatic moiety which may be catalyzed by the methyltransferase encoded in the cluster. The flavin-dependent oxidoreductase might represent the dehydrogenase yielding the aldehyde in position 1 of arnamial and other melleolides. Finally, several halogenase localized outside of the cluster, are able to catalyze the transfer of a single chlorine atom to the melleolide backbone, resulting in a 6'-chloromelleolide product. This Armillaria gallica (Bulbous honey fungus) protein is Short-chain dehydrogenase/reductase ARMGADRAFT_1018421.